The sequence spans 123 residues: Large ribosomal subunit protein bL12 (123 aa).

It belongs to the bacterial ribosomal protein bL12 family. As to quaternary structure, homodimer. Part of the ribosomal stalk of the 50S ribosomal subunit. Forms a multimeric L10(L12)X complex, where L10 forms an elongated spine to which 2 to 4 L12 dimers bind in a sequential fashion. Binds GTP-bound translation factors.

In terms of biological role, forms part of the ribosomal stalk which helps the ribosome interact with GTP-bound translation factors. Is thus essential for accurate translation. The sequence is that of Large ribosomal subunit protein bL12 from Wigglesworthia glossinidia brevipalpis.